A 165-amino-acid chain; its full sequence is Interferon gamma (165 aa).

An N-terminal signal peptide occupies residues 1–23 (MKYTSYILAFQLCIVLGSLGCYC). Gln-24 is modified (pyrrolidone carboxylic acid). N-linked (GlcNAc...) asparagine glycosylation is found at Asn-48 and Asn-120.

It belongs to the type II (or gamma) interferon family. As to quaternary structure, homodimer. Interacts with IFNGR1 (via extracellular domain); this interaction promotes IFNGR1 dimerization.

It localises to the secreted. In terms of biological role, type II interferon produced by immune cells such as T-cells and NK cells that plays crucial roles in antimicrobial, antiviral, and antitumor responses by activating effector immune cells and enhancing antigen presentation. Primarily signals through the JAK-STAT pathway after interaction with its receptor IFNGR1 to affect gene regulation. Upon IFNG binding, IFNGR1 intracellular domain opens out to allow association of downstream signaling components JAK2, JAK1 and STAT1, leading to STAT1 activation, nuclear translocation and transcription of IFNG-regulated genes. Many of the induced genes are transcription factors such as IRF1 that are able to further drive regulation of a next wave of transcription. Plays a role in class I antigen presentation pathway by inducing a replacement of catalytic proteasome subunits with immunoproteasome subunits. In turn, increases the quantity, quality, and repertoire of peptides for class I MHC loading. Increases the efficiency of peptide generation also by inducing the expression of activator PA28 that associates with the proteasome and alters its proteolytic cleavage preference. Up-regulates as well MHC II complexes on the cell surface by promoting expression of several key molecules such as cathepsins B/CTSB, H/CTSH, and L/CTSL. Participates in the regulation of hematopoietic stem cells during development and under homeostatic conditions by affecting their development, quiescence, and differentiation. The chain is Interferon gamma (IFNG) from Papio anubis (Olive baboon).